The sequence spans 386 residues: S-adenosylmethionine synthase (386 aa).

His-16 is an ATP binding site. Asp-18 provides a ligand contact to Mg(2+). Residue Glu-44 coordinates K(+). L-methionine is bound by residues Glu-57 and Gln-100. Residues 100–110 (QSRDITQGVDR) are flexible loop. Residues 165–167 (DAK), Asp-240, 246–247 (RK), Ala-263, and Lys-267 contribute to the ATP site. L-methionine is bound at residue Asp-240. Lys-271 is an L-methionine binding site.

Belongs to the AdoMet synthase family. As to quaternary structure, homotetramer; dimer of dimers. It depends on Mg(2+) as a cofactor. K(+) serves as cofactor.

Its subcellular location is the cytoplasm. It carries out the reaction L-methionine + ATP + H2O = S-adenosyl-L-methionine + phosphate + diphosphate. It participates in amino-acid biosynthesis; S-adenosyl-L-methionine biosynthesis; S-adenosyl-L-methionine from L-methionine: step 1/1. In terms of biological role, catalyzes the formation of S-adenosylmethionine (AdoMet) from methionine and ATP. The overall synthetic reaction is composed of two sequential steps, AdoMet formation and the subsequent tripolyphosphate hydrolysis which occurs prior to release of AdoMet from the enzyme. The chain is S-adenosylmethionine synthase from Francisella tularensis subsp. tularensis (strain WY96-3418).